A 623-amino-acid polypeptide reads, in one-letter code: Serine/threonine-protein kinase ArnS (623 aa).

The next 2 membrane-spanning stretches (helical) occupy residues 13–33 and 49–69; these read MILI…GIVL and VYLI…QSLI. A Protein kinase domain is found at 317–623; it reads YRVIEVIGLG…SYDIVKILEG (307 aa). ATP-binding positions include 323-331 and lysine 344; that span reads IGLGGNGYV. The active-site Proton acceptor is aspartate 460.

This sequence belongs to the protein kinase superfamily. Ser/Thr protein kinase family. Autophosphorylated.

The protein resides in the cell membrane. The catalysed reaction is L-seryl-[protein] + ATP = O-phospho-L-seryl-[protein] + ADP + H(+). It catalyses the reaction L-threonyl-[protein] + ATP = O-phospho-L-threonyl-[protein] + ADP + H(+). Autophosphorylation is stimulated by Mn(2+). In terms of biological role, plays an essential role in the controlled expression of archaellum components during starvation-induced motility. May inhibit arnR transcription and promote ArnR translation. This chain is Serine/threonine-protein kinase ArnS, found in Sulfolobus acidocaldarius (strain ATCC 33909 / DSM 639 / JCM 8929 / NBRC 15157 / NCIMB 11770).